The sequence spans 347 residues: Probable magnetosome protein Mms36 (347 aa).

A helical membrane pass occupies residues 25–45; it reads VLVLYLAIAVVVAVLAWPWLA.

The protein resides in the magnetosome membrane. The 4 genes of this operon collectively influence magnetosome size and number. This is Probable magnetosome protein Mms36 from Magnetospirillum gryphiswaldense (strain DSM 6361 / JCM 21280 / NBRC 15271 / MSR-1).